We begin with the raw amino-acid sequence, 217 residues long: U exon protein (217 aa).

2 disordered regions span residues 68-110 (SKIF…TNHG) and 170-217 (EKEA…RQGR). Polar residues predominate over residues 202–217 (GGFQQPTGANQARQGR).

It belongs to the adenoviridae U exon protein family.

It is found in the host nucleus. It localises to the host nucleoplasm. The protein resides in the host nucleolus. In terms of biological role, might play a role in viral replication since it is associated with viral replication centers. Seems to have an effect on DBP localization. The sequence is that of U exon protein from Homo sapiens (Human).